The following is an 862-amino-acid chain: AP-1 complex subunit gamma-2 (862 aa).

HEAT repeat units lie at residues 1 to 28 (MNPFSSGTRLSDMIRAIRASKTAAEERA), 29 to 65 (VVRKECAAIRASINENDQDYRHRDLAKLMFIHMLGYP), 101 to 136 (EVLMLVTNSLKQDLNHTNQYIVGLALCALGNICSAE), 137 to 173 (MARDLAPEVERLLQFRDPNIRKKAALCAIRIIRKVPD), 308 to 345 (GLRVLAINILGKFLSNRDNNIRYVALNMLMRSLTVDSQ), 346 to 382 (AVQRHRATILECVKDSDASIQKRALELIYLLVNENNV), 384 to 417 (PLAKELIEYLEVSEQDFKGDLTAKICSIVEKFAP), 418 to 454 (EKIWYIDQMLKVLSEAGTYVKEDVWHALIVVITNAPD), 458 to 496 (YTVRALYRALHTSFEQETLVRVAIWCIGEYADLLVNNAG), 507 to 545 (TESDAVDVVENAIKHHLSDVTTKAMALIALLKISSRFPS), and 560 to 599 (SFVLELQQRSLEFSSVIQKHQNIRSSLVERMPVLDEATFS). Positions 744–859 (AAYPSIVAFE…LEEGQINNFP (116 aa)) constitute a GAE domain.

This sequence belongs to the adaptor complexes large subunit family. As to quaternary structure, adaptor protein complex 1 (AP-1) is a heterotetramer composed of two large adaptins (gamma-type subunit and beta-type subunit), a medium adaptin (mu-type subunit) and a small adaptin (sigma-type subunit).

The protein localises to the golgi apparatus. It is found in the cytoplasmic vesicle. Its subcellular location is the clathrin-coated vesicle membrane. Subunit of clathrin-associated adaptor protein complex 1 that plays a role in protein sorting at the trans-Golgi network and early endosomes (TGN/EE). The AP complexes mediate both the recruitment of clathrin to membranes and the recognition of sorting signals within the cytosolic tails of transmembrane cargo molecules. The protein is AP-1 complex subunit gamma-2 of Arabidopsis thaliana (Mouse-ear cress).